The following is a 351-amino-acid chain: Type II methyltransferase M.DsaV (351 aa).

The 307-residue stretch at 6–312 (LKFIDLFAGI…QKMLSYIDLT (307 aa)) folds into the SAM-dependent MTase C5-type domain. The active site involves cysteine 75.

The protein belongs to the class I-like SAM-binding methyltransferase superfamily. C5-methyltransferase family.

The enzyme catalyses a 2'-deoxycytidine in DNA + S-adenosyl-L-methionine = a 5-methyl-2'-deoxycytidine in DNA + S-adenosyl-L-homocysteine + H(+). In terms of biological role, a methylase, recognizes the double-stranded sequence 5'-CCNGG-3', methylates C-2 on both strands, and protects the DNA from cleavage by the DsaV endonuclease. The protein is Type II methyltransferase M.DsaV of Dactylococcopsis salina (Myxobaktron salinum).